The primary structure comprises 179 residues: Large ribosomal subunit protein uL5 (179 aa).

The protein belongs to the universal ribosomal protein uL5 family. As to quaternary structure, part of the 50S ribosomal subunit; part of the 5S rRNA/L5/L18/L25 subcomplex. Contacts the 5S rRNA and the P site tRNA. Forms a bridge to the 30S subunit in the 70S ribosome.

Functionally, this is one of the proteins that bind and probably mediate the attachment of the 5S RNA into the large ribosomal subunit, where it forms part of the central protuberance. In the 70S ribosome it contacts protein S13 of the 30S subunit (bridge B1b), connecting the 2 subunits; this bridge is implicated in subunit movement. Contacts the P site tRNA; the 5S rRNA and some of its associated proteins might help stabilize positioning of ribosome-bound tRNAs. The chain is Large ribosomal subunit protein uL5 from Rickettsia africae (strain ESF-5).